We begin with the raw amino-acid sequence, 1338 residues long: MWQFIRSRILTVIIFIGAAHGLLVVGPKFIRANQEYTLVISNFNSQLSKVDLLLKLEGETDNGLSVLNVTKMVDVRRNMNRMINFNMPEDLTAGNYKITIDGQRGFSFHKEAELVYLSKSISGLIQVDKPVFKPGDTVNFRVIVLDTELKPPARVKSVYVTIRDPQRNVIRKWSTAKLYAGVFESDLQIAPTPMLGVWNISVEVEGEELVSKTFEVKEYVLSTFDVQVMPSVIPLEEHQAVNLTIEANYHFGKPVQGVAKVELYLDDDKLKLKKELTVYGKGQVELRFDNFAMDADQQDVPVKVSFVEQYTNRTVVKQSQITVYRYAYRVELIKESPQFRPGLPFKCALQFTHHDGTPAKGISGKVEVSDVRFETTTTSDNDGLIKLELQPSEGTEQLSIHFNAVDGFFFYEDVNKVETVTDAYIKLELKSPIKRNKLMRFMVTCTERMTFFVYYVMSKGNIIDAGFMRPNKQPKYLLQLNATEKMIPRAKILIATVAGRTVVYDFADLDFQELRNNFDLSIDEQEIKPGRQIELSMSGRPGAYVGLAAYDKALLLFNKNHDLFWEDIGQVFDGFHAINENEFDIFHSLGLFARTLDDILFDSANEKTGRNALQSGKPIGKLVSYRTNFQESWLWKNVSIGRSGSRKLIEVVPDTTTSWYLTGFSIDPVYGLGIIKKPIQFTTVQPFYIVENLPYSIKRGEAVVLQFTLFNNLGAEYIADVTLYNVANQTEFVGRPNTDLSYTKSVSVPPKVGVPISFLIKARKLGEMAVRVKASIMLGHETDALEKVIRVMPESLVQPRMDTRFFCFDDHKNQTFPINLDINKKADSGSTKIEFRLNPNLLTTVIKNLDHLLGVPTGCGEQNMVKFVPNILVLDYLHAIGSKEQHLIDKATNLLRQGYQNQMRYRQTDGSFGLWETTNGSVFLTAFVGTSMQTAVKYISDIDAAMVEKALDWLASKQHFSGRFDKAGAEYHKEMQGGLRNGVALTSYVLMALLENDIAKAKHAEVIQKGMTYLSNQFGSINNAYDLSIATYAMMLNGHTMKEEALNKLIDMSFIDADKNERFWNTTNPIETTAYALLSFVMAEKYTDGIPVMNWLVNQRYVTGSFPSTQDTFVGLKALTKMAEKISPSRNDYTVQLKYKKSAKYFKINSEQIDVENFVDIPEDTKKLEINVGGIGFGLLEVVYQFNLNLVNFENRFQLDLEKQNTGSDYELRLKVCASYIPQLTDRRSNMALIEVTLPSGYVVDRNPISEQTKVNPIQKTEIRYGGTSVVLYYDNMGSERNCFTLTAYRRFKVALKRPAYVVVYDYYNTNLNAIKVYEVDKQNLCEICDEEDCPAEC.

Positions 1 to 21 (MWQFIRSRILTVIIFIGAAHG) are cleaved as a signal peptide. Residues N68, N199, N242, N312, and N481 are each glycosylated (N-linked (GlcNAc...) asparagine). Residues 580–609 (ENEFDIFHSLGLFARTLDDILFDSANEKTG) form a may contain the cleavage site region. N-linked (GlcNAc...) asparagine glycosylation is found at N637, N728, and N813. A cross-link (isoglutamyl cysteine thioester (Cys-Gln)) is located at residues 859–862 (CGEQ). N919 and N1065 each carry an N-linked (GlcNAc...) asparagine glycan. 3 cysteine pairs are disulfide-bonded: C1217–C1283, C1326–C1338, and C1329–C1334.

In terms of assembly, heterodimer of a TEP1-N chain and an TEP1-C chain non-covalently linked. Forms a complex composed of TEP1-N and TEP1-C heterodimer, LRIM1 and APL1C; the interaction stabilizes TEP1-N and TEP1-C heterodimer, prevents its binding to tissues while circulating in the hemolymph and protects the thioester bond from hydrolysis. Mature TEP1 and to a lesser extent full-length TEP1 interact with SPCLIP1; the interaction is induced by microbial infection. In terms of processing, in the hemolymph, the full-length protein is cleaved by an unknow protease into a 75kDa N-terminal (TEP1-N) chain and an 80kDa C-terminal (TEP1-C) chain which remain non-covalently linked. The TEP1-C chain contains the thioester bond which covalently binds to the pathogen surface. Cleavage is induced by bacterial infection or aseptic wound injury. During embryonic and pupal development, the cleaved form is the predominant form. N-glycosylated.

It is found in the secreted. Functionally, plays an essential role in the innate immune response against bacteria, fungi and protozoa infection. After proteolytic cleavage, the protein C-terminus binds covalently through a thioester bond to the pathogen surface resulting in pathogen clearance either by melanization or lysis. Initiate the recruitment and activation of a cascade of proteases, mostly of CLIP-domain serine proteases, which leads to the proteolytic cleavage of the prophenoloxidase (PPO) into active phenoloxidase (PO), the rate-limiting enzyme in melanin biosynthesis. In response to parasite P.berghei-mediated infection, binds to and mediates killing of ookinetes, as they egress from midgut epithelial cells into the basal labyrinth, by both lysis and melanization. During bacterial infection, binds to both Gram-positive and Gram-negative bacteria but only promotes phagocytosis of Gram-negative bacteria. Promotes the accumulation of SPCLIP1 onto the surface of P.berghei ookinetes and bacterium E.coli which leads to the melanization of the pathogen. Recruits CLIPA2 to bacteria surface. In response to bacterial infection, required for periostial hemocyte aggregation, but not for the aggregation of sessile hemocytes in non-periostial regions. During the late stage of fungus B.bassiana-mediated infection, required for the initiation of hyphae melanization by binding to the surface of hyphae and recruiting prophenoloxidase PPO to them. Plays a role in male fertility by binding to defective sperm cells and promoting their removal during spermatogenesis. Binds to and mediates killing of parasite P.bergei ookinetes by lysis and melanization. Its function is as follows. Binds covalently through a thioester bond to the pathogen surface resulting in pathogen clearance. The polypeptide is Thioester-containing protein 1 allele R1 (Anopheles gambiae (African malaria mosquito)).